The chain runs to 409 residues: Testis-expressed protein 13A (409 aa).

A required for repression of transcription region spans residues 92-408 (WLHGFAKLHK…CGKGIWLQKP (317 aa)). The tract at residues 347–374 (GGPHRIDHQEHPRDRRYSEPHQQRPPVY) is disordered. Positions 348–368 (GPHRIDHQEHPRDRRYSEPHQ) are enriched in basic and acidic residues. The RanBP2-type zinc finger occupies 376-400 (RPGDWDCPWCNAVNFSRRDTCFDCG). 4 residues coordinate Zn(2+): Cys382, Cys385, Cys396, and Cys399.

This sequence belongs to the TEX13 family. In terms of assembly, interacts with CNOT1; the interaction may inhibit CNOT1 binding to mRNA and subsequently CNOT1-mediated mRNA degradation. In terms of tissue distribution, testis specific.

Its function is as follows. Binds to ssRNA containing the consensus sequence 5'-AGGUAA-3'. Plays a role in transcriptional repression. Required for rapid sperm motility and timely degradation of mRNA via its interaction with CNOT1. The sequence is that of Testis-expressed protein 13A from Homo sapiens (Human).